The chain runs to 150 residues: UPF0098 protein CPn_0877/CP_0992/CPj0877/CpB0906 (150 aa).

This sequence belongs to the UPF0098 family.

This chain is UPF0098 protein CPn_0877/CP_0992/CPj0877/CpB0906, found in Chlamydia pneumoniae (Chlamydophila pneumoniae).